A 121-amino-acid polypeptide reads, in one-letter code: Small ribosomal subunit protein bS6 (121 aa).

Residues 96–121 form a disordered region; sequence DTGPSSMMKTVEREDARKTQQAEYQA. Over residues 105–115 the composition is skewed to basic and acidic residues; it reads TVEREDARKTQ.

Belongs to the bacterial ribosomal protein bS6 family.

Binds together with bS18 to 16S ribosomal RNA. The sequence is that of Small ribosomal subunit protein bS6 from Albidiferax ferrireducens (strain ATCC BAA-621 / DSM 15236 / T118) (Rhodoferax ferrireducens).